Reading from the N-terminus, the 159-residue chain is Ribosomal RNA large subunit methyltransferase H (159 aa).

S-adenosyl-L-methionine is bound by residues Leu-76, Gly-108, and 127–132 (FSHMTF).

It belongs to the RNA methyltransferase RlmH family. As to quaternary structure, homodimer.

It is found in the cytoplasm. The catalysed reaction is pseudouridine(1915) in 23S rRNA + S-adenosyl-L-methionine = N(3)-methylpseudouridine(1915) in 23S rRNA + S-adenosyl-L-homocysteine + H(+). Functionally, specifically methylates the pseudouridine at position 1915 (m3Psi1915) in 23S rRNA. The polypeptide is Ribosomal RNA large subunit methyltransferase H (Halothermothrix orenii (strain H 168 / OCM 544 / DSM 9562)).